The chain runs to 193 residues: Ferredoxin-2, mitochondrial (193 aa).

Residues 38 to 70 (QATPEKLETSNEEEGSSSAQITAGVESDAENQR) form a disordered region. The 103-residue stretch at 78–180 (VEVVFLDRSG…GAEFTLPKIT (103 aa)) folds into the 2Fe-2S ferredoxin-type domain. Residues C115, C121, C124, and C161 each contribute to the [2Fe-2S] cluster site.

It belongs to the adrenodoxin/putidaredoxin family. Component of the mitochondrial core iron-sulfur cluster (ISC) complex composed of NFS1, LYRM4, NDUFAB1, ISCU, FXN, and FDX2; this complex is a heterohexamer containing two copies of each monomer. [2Fe-2S] cluster serves as cofactor.

Its subcellular location is the mitochondrion. It localises to the mitochondrion matrix. Functionally, electron donor, of the core iron-sulfur cluster (ISC) assembly complex, that acts to reduce the persulfide into sulfide during [2Fe-2S] clusters assembly on the scaffolding protein ISCU. The core iron-sulfur cluster (ISC) assembly complex is involved in the de novo synthesis of a [2Fe-2S] cluster, the first step of the mitochondrial iron-sulfur protein biogenesis. This process is initiated by the cysteine desulfurase complex (NFS1:LYRM4:NDUFAB1) that produces persulfide which is delivered on the scaffold protein ISCU in a FXN-dependent manner. Then this complex is stabilized by FDX2 which provides reducing equivalents to accomplish the [2Fe-2S] cluster assembly. Finally, the [2Fe-2S] cluster is transferred from ISCU to chaperone proteins, including HSCB, HSPA9 and GLRX5. Essential for coenzyme Q biosynthesis: together with FDXR, transfers the electrons required for the hydroxylation reaction performed by COQ6. The chain is Ferredoxin-2, mitochondrial from Xenopus laevis (African clawed frog).